Consider the following 1291-residue polypeptide: DNA-directed RNA polymerase subunit beta' (1291 aa).

The Zn(2+) site is built by Cys-60, Cys-62, Cys-75, and Cys-78. Residues Asp-535, Asp-537, and Asp-539 each contribute to the Mg(2+) site. Zn(2+) contacts are provided by Cys-878, Cys-954, Cys-961, and Cys-964.

Belongs to the RNA polymerase beta' chain family. In terms of assembly, the RNAP catalytic core consists of 2 alpha, 1 beta, 1 beta' and 1 omega subunit. When a sigma factor is associated with the core the holoenzyme is formed, which can initiate transcription. Mg(2+) is required as a cofactor. It depends on Zn(2+) as a cofactor.

It carries out the reaction RNA(n) + a ribonucleoside 5'-triphosphate = RNA(n+1) + diphosphate. Its function is as follows. DNA-dependent RNA polymerase catalyzes the transcription of DNA into RNA using the four ribonucleoside triphosphates as substrates. The polypeptide is DNA-directed RNA polymerase subunit beta' (Thermobifida fusca (strain YX)).